We begin with the raw amino-acid sequence, 751 residues long: MVAERTRKAAASGSRGPGELGAPGPGTVALAEQCARLPSPGCCGLLALALCSLALSLLAHFRTAELQARVLRLEAERGEQQMEKAILGRVNQLLDEKWKFYSRRRREAPKMSPGCNCPPGPPGPTGRPGLPGDKGAIGMPGRVGIKGQPGEKGAPGDAGMSIVGPRGPPGQPGTRGFPGFPGPIGLDGRPGHPGPKGEMGLVGPRGQPGPQGQKGEKGQCGEYPHREYPGGMLAALRSNPIMSLKLLPLLNSVRLAPPPVIKRRTFQGEQSQTGIQGPPGPPGPPGPSGPLGHPGLPGPIGPPGLPGPPGPKGDPGIQGYHGRKGERGMPGMPGKHGAKGVPGIAVAGMKGEPGTPGTKGEKGAAGSPGLLGQKGEKGDAGNAIGGGRGEPGPPGLPGPPGPKGEAGVDGQAGPPGQQGDKGQPGAAGEQGPSGPKGAKGEPGKGEMVDYNGSINEALQEIRTLALMGPPGLPGQTGPPGPPGTPGQRGEIGLPGPPGHDGDKGPRGKPGDMGPAGPQGPPGKDGPPGMKGEVGPPGSPGEKGETGQAGPQGLDGPTGEKGEPGDEGRPGATGLPGPIGLPGFTGEKGEAGEKGDPGAEVPGPPGPEGPPGPPGLQGFPGPKGEAGLEGSKGEKGSQGEKGDRGPLGLPGASGLDGRPGPPGTPGPIGVPGPAGPKGERGSKGDPGMTGPTGAAGLPGLHGPPGDKGNRGERGKKGSRGPKGDKGDQGAPGLDAPCPLGEDGLPVQGCWNK.

Positions 1-24 (MVAERTRKAAASGSRGPGELGAPG) are disordered. Over 1–40 (MVAERTRKAAASGSRGPGELGAPGPGTVALAEQCARLPSP) the chain is Cytoplasmic. The tract at residues 1–119 (MVAERTRKAA…KMSPGCNCPP (119 aa)) is nonhelical region 1 (NC1). Residues 15–24 (RGPGELGAPG) show a composition bias toward gly residues. A helical; Signal-anchor for type II membrane protein transmembrane segment spans residues 41–59 (GCCGLLALALCSLALSLLA). The Extracellular segment spans residues 60–751 (HFRTAELQAR…GLPVQGCWNK (692 aa)). Disordered stretches follow at residues 108 to 127 (APKMSPGCNCPPGPPGPTGR), 190 to 225 (PGHPGPKGEMGLVGPRGQPGPQGQKGEKGQCGEYPH), and 265 to 449 (TFQG…EMVD). The segment covering 116–125 (NCPPGPPGPT) has biased composition (pro residues). A triple-helical region 1 (COL1) region spans residues 120-223 (GPPGPTGRPG…KGEKGQCGEY (104 aa)). Low complexity predominate over residues 204–213 (PRGQPGPQGQ). The segment covering 214 to 225 (KGEKGQCGEYPH) has biased composition (basic and acidic residues). The interval 224–273 (PHREYPGGMLAALRSNPIMSLKLLPLLNSVRLAPPPVIKRRTFQGEQSQT) is nonhelical region 2 (NC2). The segment at 274 to 445 (GIQGPPGPPG…KGAKGEPGKG (172 aa)) is triple-helical region 2 (COL2). Pro residues-rich tracts occupy residues 278–288 (PPGPPGPPGPS), 296–312 (LPGPIGPPGLPGPPGPK), and 391–402 (PGPPGLPGPPGP). Positions 403–436 (KGEAGVDGQAGPPGQQGDKGQPGAAGEQGPSGPK) are enriched in low complexity. The segment covering 438-447 (AKGEPGKGEM) has biased composition (basic and acidic residues). Residues 446 to 467 (EMVDYNGSINEALQEIRTLALM) are nonhelical region 3 (NC3). Asn-451 carries N-linked (GlcNAc...) asparagine glycosylation. Residues 466 to 751 (LMGPPGLPGQ…GLPVQGCWNK (286 aa)) are disordered. The tract at residues 468-733 (GPPGLPGQTG…KGDQGAPGLD (266 aa)) is triple-helical region 3 (COL3). Positions 470 to 484 (PGLPGQTGPPGPPGT) are enriched in pro residues. Composition is skewed to basic and acidic residues over residues 499 to 509 (HDGDKGPRGKP), 557 to 568 (TGEKGEPGDEGR), and 586 to 596 (EKGEAGEKGDP). Residues 601–613 (PGPPGPEGPPGPP) show a composition bias toward pro residues. Low complexity predominate over residues 615-628 (LQGFPGPKGEAGLE). Positions 630–643 (SKGEKGSQGEKGDR) are enriched in basic and acidic residues. The segment covering 658-673 (PGPPGTPGPIGVPGPA) has biased composition (pro residues). The span at 684 to 699 (DPGMTGPTGAAGLPGL) shows a compositional bias: low complexity. Over residues 706 to 726 (KGNRGERGKKGSRGPKGDKGD) the composition is skewed to basic and acidic residues. The nonhelical region 4 (NC4) stretch occupies residues 734–751 (APCPLGEDGLPVQGCWNK).

As to quaternary structure, homotrimer; disulfide-linked. Nucleation of the type XIII collagen triple helix is likely to occur at the N-terminal region with triple helix formation proceeding from the N- to the C-terminus. Interacts with FN1, perlecan/HSPG2 and NID2.

The protein resides in the cell membrane. It localises to the postsynaptic cell membrane. Functionally, involved in cell-matrix and cell-cell adhesion interactions that are required for normal development. May participate in the linkage between muscle fiber and basement membrane. May play a role in endochondral ossification of bone and branching morphogenesis of lung. Binds heparin. At neuromuscular junctions, may play a role in acetylcholine receptor clustering. This Mus musculus (Mouse) protein is Collagen alpha-1(XIII) chain.